The primary structure comprises 512 residues: AMP phosphorylase (512 aa).

Residues glycine 166, serine 192–glycine 197, and threonine 201 each bind AMP. Residue aspartate 254 is the Proton donor of the active site. Residues serine 262 and lysine 286 each contribute to the AMP site.

It belongs to the thymidine/pyrimidine-nucleoside phosphorylase family. Type 2 subfamily.

It carries out the reaction AMP + phosphate = alpha-D-ribose 1,5-bisphosphate + adenine. The enzyme catalyses CMP + phosphate = cytosine + alpha-D-ribose 1,5-bisphosphate. The catalysed reaction is UMP + phosphate = alpha-D-ribose 1,5-bisphosphate + uracil. In terms of biological role, catalyzes the conversion of AMP and phosphate to adenine and ribose 1,5-bisphosphate (R15P). Exhibits phosphorylase activity toward CMP and UMP in addition to AMP. Functions in an archaeal AMP degradation pathway, together with R15P isomerase and RubisCO. The protein is AMP phosphorylase of Methanothrix thermoacetophila (strain DSM 6194 / JCM 14653 / NBRC 101360 / PT) (Methanosaeta thermophila).